The following is a 407-amino-acid chain: Protein ZNF365 (407 aa).

S16 is modified (phosphoserine). The C2H2-type; degenerate zinc-finger motif lies at 26 to 51; it reads FRCPRCGDHTRFRSLSSLRAHLEFSH. Phosphoserine is present on S138. The stretch at 169-296 forms a coiled coil; that stretch reads VEAVDRTIEK…KQLEYYQSQQ (128 aa). T175 carries the post-translational modification Phosphothreonine. Positions 347 to 392 are disordered; it reads LKKAKDDRASMQPAKAIHEQAESSRDLCRPPKKGELLGFGRKGNIR. Basic and acidic residues predominate over residues 362-381; the sequence is AIHEQAESSRDLCRPPKKGE. The residue at position 369 (S369) is a Phosphoserine.

As to quaternary structure, homodimers. Interacts with NDE1 and NDEL1. Interacts with DISC1. Interacts with PARP1. Interacts with MCRS1.

It is found in the cytoplasm. The protein resides in the cytoskeleton. Its subcellular location is the microtubule organizing center. It localises to the centrosome. In terms of biological role, involved in the regulation of neurogenesis. Negatively regulates neurite outgrowth. Involved in the morphogenesis of basket cells in the somatosensory cortex during embryogenesis. Involved in the positive regulation of oligodendrocyte differentiation during postnatal growth. Involved in dendritic arborization, morphogenesis of spine density dendrite, and establishment of postsynaptic dendrite density in cortical pyramidal neurons. Involved in homologous recombination (HR) repair pathway. Required for proper resolution of DNA double-strand breaks (DSBs) by HR. Is required for recovery of stalled replication forks, and directly contributes to genomic stability. Interacts with PARP1 and mediates MRE11-dependent DNA end resection during replication fork recovery. Contributes to genomic stability by preventing telomere dysfunction. This Pongo abelii (Sumatran orangutan) protein is Protein ZNF365 (ZNF365).